The following is a 472-amino-acid chain: 4-O-methyl-glucuronoyl methylesterase 1 (472 aa).

The first 20 residues, Met1–Ala20, serve as a signal peptide directing secretion. The CBM1 domain occupies Gln21 to Leu56. Positions Thr62 to Cys97 are disordered. Residues Ala63 to Thr72 show a composition bias toward pro residues. The span at Ser73–Thr96 shows a compositional bias: low complexity. Cystine bridges form between Cys97–Cys131, Cys283–Cys419, and Cys315–Cys391. The GXSYXG catalytic site motif signature appears at Gly282–Gly287. Ser284 serves as the catalytic Nucleophile. Lys288, Gln330, Glu338, and Trp382 together coordinate substrate. His418 (proton donor/acceptor) is an active-site residue. Residue Asn465 is glycosylated (N-linked (GlcNAc...) asparagine).

Belongs to the carbohydrate esterase 15 (CE15) family.

Its subcellular location is the secreted. It carries out the reaction a 4-O-methyl-alpha-D-glucuronosyl ester derivative + H2O = 4-O-methyl-alpha-D-glucuronate derivative + an alcohol + H(+). Its function is as follows. Glucuronoyl esterase which may play a significant role in biomass degradation, as it is considered to disconnect hemicellulose from lignin through the hydrolysis of the ester bond between 4-O-methyl-D-glucuronic acid residues of glucuronoxylans and aromatic alcohols of lignin. Can hydrolyze benzyl glucuronic acid (BnGlcA), allyl glucuronic acid (allylGlcA) and to a lower degree methyl glucuronic acid (MeGlcA) in vitro. The polypeptide is 4-O-methyl-glucuronoyl methylesterase 1 (Phanerochaete chrysosporium (strain RP-78 / ATCC MYA-4764 / FGSC 9002) (White-rot fungus)).